The sequence spans 66 residues: Large ribosomal subunit protein bL35 (66 aa).

This sequence belongs to the bacterial ribosomal protein bL35 family.

This chain is Large ribosomal subunit protein bL35, found in Synechococcus sp. (strain JA-2-3B'a(2-13)) (Cyanobacteria bacterium Yellowstone B-Prime).